The sequence spans 236 residues: 2-C-methyl-D-erythritol 4-phosphate cytidylyltransferase (236 aa).

Belongs to the IspD/TarI cytidylyltransferase family. IspD subfamily. Homodimer.

It catalyses the reaction 2-C-methyl-D-erythritol 4-phosphate + CTP + H(+) = 4-CDP-2-C-methyl-D-erythritol + diphosphate. The protein operates within isoprenoid biosynthesis; isopentenyl diphosphate biosynthesis via DXP pathway; isopentenyl diphosphate from 1-deoxy-D-xylulose 5-phosphate: step 2/6. In terms of biological role, catalyzes the formation of 4-diphosphocytidyl-2-C-methyl-D-erythritol from CTP and 2-C-methyl-D-erythritol 4-phosphate (MEP). The protein is 2-C-methyl-D-erythritol 4-phosphate cytidylyltransferase of Klebsiella pneumoniae subsp. pneumoniae (strain ATCC 700721 / MGH 78578).